The chain runs to 410 residues: Cysteine desulfurase IscS (410 aa).

Pyridoxal 5'-phosphate-binding positions include 80–81, N160, Q188, and 208–210; these read AT and SGH. K211 bears the N6-(pyridoxal phosphate)lysine mark. T248 contributes to the pyridoxal 5'-phosphate binding site. Catalysis depends on C334, which acts as the Cysteine persulfide intermediate. C334 lines the [2Fe-2S] cluster pocket.

The protein belongs to the class-V pyridoxal-phosphate-dependent aminotransferase family. NifS/IscS subfamily. As to quaternary structure, homodimer. Forms a heterotetramer with IscU, interacts with other sulfur acceptors. The cofactor is pyridoxal 5'-phosphate.

The protein resides in the cytoplasm. It catalyses the reaction (sulfur carrier)-H + L-cysteine = (sulfur carrier)-SH + L-alanine. It participates in cofactor biosynthesis; iron-sulfur cluster biosynthesis. Its function is as follows. Master enzyme that delivers sulfur to a number of partners involved in Fe-S cluster assembly, tRNA modification or cofactor biosynthesis. Catalyzes the removal of elemental sulfur atoms from cysteine to produce alanine. Functions as a sulfur delivery protein for Fe-S cluster synthesis onto IscU, an Fe-S scaffold assembly protein, as well as other S acceptor proteins. In Rickettsia massiliae (strain Mtu5), this protein is Cysteine desulfurase IscS.